The following is a 404-amino-acid chain: Arginine biosynthesis bifunctional protein ArgJ (404 aa).

6 residues coordinate substrate: Thr-166, Lys-189, Thr-200, Glu-280, Asn-399, and Ser-404. The active-site Nucleophile is the Thr-200.

This sequence belongs to the ArgJ family. In terms of assembly, heterotetramer of two alpha and two beta chains.

The protein resides in the cytoplasm. The enzyme catalyses N(2)-acetyl-L-ornithine + L-glutamate = N-acetyl-L-glutamate + L-ornithine. The catalysed reaction is L-glutamate + acetyl-CoA = N-acetyl-L-glutamate + CoA + H(+). It participates in amino-acid biosynthesis; L-arginine biosynthesis; L-ornithine and N-acetyl-L-glutamate from L-glutamate and N(2)-acetyl-L-ornithine (cyclic): step 1/1. It functions in the pathway amino-acid biosynthesis; L-arginine biosynthesis; N(2)-acetyl-L-ornithine from L-glutamate: step 1/4. Its function is as follows. Catalyzes two activities which are involved in the cyclic version of arginine biosynthesis: the synthesis of N-acetylglutamate from glutamate and acetyl-CoA as the acetyl donor, and of ornithine by transacetylation between N(2)-acetylornithine and glutamate. The polypeptide is Arginine biosynthesis bifunctional protein ArgJ (Mycolicibacterium paratuberculosis (strain ATCC BAA-968 / K-10) (Mycobacterium paratuberculosis)).